The sequence spans 488 residues: Cytochrome P450 family 716 subfamily AD polypeptide 2 (488 aa).

Residues 5-25 (LLLLSTLLILTLCCHFFYLFI) traverse the membrane as a helical segment. C433 is a binding site for heme.

The protein belongs to the cytochrome P450 family. Requires heme as cofactor. Expressed in maturing fruits and in juice vesicles.

It localises to the membrane. It catalyses the reaction (1R,2R,3S,8R,10R,11R,15S,16S)-3-(acetyloxy)-15-[(4R)-4-[(2S)-3,3-dimethyloxiran-2-yl]-1,4-dihydroxybutan-2-yl]-2,7,7,11,16-pentamethyl-5-oxo-6-oxatetracyclo[9.7.0.0(2,8).0(12,16)]octadec-12-en-10-yl acetate + reduced [NADPH--hemoprotein reductase] + O2 = (1R,2R,3S,8R,10R,11R,15S,16S)-3-(acetyloxy)-15-(1-hydroxy-4-oxobutan-2-yl)-2,7,7,11,16-pentamethyl-5-oxo-6-oxatetracyclo[9.7.0.0(2,8).0(12,16)]octadec-12-en-10-yl acetate + 2-methylpropanoate + oxidized [NADPH--hemoprotein reductase] + H2O + 2 H(+). It functions in the pathway secondary metabolite biosynthesis; terpenoid biosynthesis. Monooxygenase involved in the biosynthesis of limonoids triterpene natural products such as limonin, a compound with insecticidal activity responsible for the bitter taste in citrus. Catalyzes the formation of (1R,2R,3S,8R,10R,11R,15S,16S)-3-(acetyloxy)-15-(1-hydroxy-4-oxobutan-2-yl)-2,7,7,11,16-pentamethyl-5-oxo-6-oxatetracyclo[9.7.0.0(2,8).0(12,16)]octadec-12-en-10-yl acetate. The chain is Cytochrome P450 family 716 subfamily AD polypeptide 2 from Citrus sinensis (Sweet orange).